We begin with the raw amino-acid sequence, 100 residues long: Large ribosomal subunit protein uL23 (100 aa).

It belongs to the universal ribosomal protein uL23 family. Part of the 50S ribosomal subunit. Contacts protein L29, and trigger factor when it is bound to the ribosome.

In terms of biological role, one of the early assembly proteins it binds 23S rRNA. One of the proteins that surrounds the polypeptide exit tunnel on the outside of the ribosome. Forms the main docking site for trigger factor binding to the ribosome. This is Large ribosomal subunit protein uL23 from Mycobacterium marinum (strain ATCC BAA-535 / M).